Reading from the N-terminus, the 571-residue chain is DExH-box ATP-dependent RNA helicase DExH16, mitochondrial (571 aa).

A mitochondrion-targeting transit peptide spans 1 to 56; the sequence is MAYSVVRLRKVSALGISRVLQADKGSLWRFHFEPEFGDLLRLGVLTRNYRKNSGSP. The Helicase ATP-binding domain occupies 83–212; it reads IARKKKRKVI…HLCGDPAVVP (130 aa). 96 to 103 is a binding site for ATP; the sequence is GPTNSGKT. The DEIH box; degenerate signature appears at 176–179; it reads DEIQ. Residues 213–399 enclose the Helicase C-terminal domain; it reads LVEDILKVTG…GLFPTFDLLS (187 aa).

Belongs to the DExH box helicase family. As to quaternary structure, homodimer; in free form. Component of the mitochondrial degradosome (mtEXO) complex which is a heteropentamer containing 2 copies of SUPV3L1 and 3 copies of PNPT1. It depends on Mg(2+) as a cofactor. Mn(2+) is required as a cofactor. In terms of tissue distribution, weakly expressed.

It localises to the nucleus. It is found in the mitochondrion matrix. The protein resides in the mitochondrion nucleoid. The enzyme catalyses ATP + H2O = ADP + phosphate + H(+). With respect to regulation, activated by the presence of mitochondrial RNA. In terms of biological role, major helicase player in mitochondrial RNA metabolism. Component of the mitochondrial degradosome (mtEXO) complex, that degrades 3' overhang double-stranded RNA with a 3'-to-5' directionality in an ATP-dependent manner. ATPase and ATP-dependent multisubstrate helicase, able to unwind double-stranded (ds) DNA and RNA, and RNA/DNA heteroduplexes in the 5'-to-3' direction. Plays a role in the RNA surveillance system in mitochondria; regulates the stability of mature mRNAs, the removal of aberrantly formed mRNAs and the rapid degradation of non coding processing intermediates. Required during pollen development. This Arabidopsis thaliana (Mouse-ear cress) protein is DExH-box ATP-dependent RNA helicase DExH16, mitochondrial.